The primary structure comprises 168 residues: Iron-sulfur cluster assembly enzyme ISCU (168 aa).

Residues 1–35 (MAAATGAGRLRRAASALLLRSPRLPARELSAPARL) constitute a mitochondrion transit peptide. Ser15 carries the phosphoserine modification. The Cysteine persulfide intermediate role is filled by Cys70. The residue at position 70 (Cys70) is a Cysteine persulfide. Residues Asp72, Cys96, and Cys139 each coordinate Zn(2+). Cys139 acts as the Cysteine persulfide intermediate in catalysis. Cys139 is subject to Cysteine persulfide.

The protein belongs to the NifU family. As to quaternary structure, homodimer; Tyr-36-mediated dimerization of two iron- and sulfide-containing ISCU subunit bind to the cysteine desulfurase complex. Component of the mitochondrial core iron-sulfur cluster (ISC) complex composed of NFS1, LYRM4, NDUFAB1, ISCU, FXN, and FDX2; this complex is a heterohexamer containing two copies of each monomer. Interacts (D-state) with NFS1 (homodimer form); each monomer interacts with the C-terminal regions of each NFS1 monomer. Interacts (monomer form) with FXN (via ferrous form); the interaction is possible when both are bound to the dimeric form of the cysteine desulfurase complex (NFS1:LYRM4) and enhances FXN interaction to the dimeric form of the cysteine desulfurase complex (NFS1:LYRM4). Interacts with GLRX5. Interacts (D-state) with HSPA9. Interacts (S-state) with HSCB; this interaction stimulates the ATPase activity of HSPA9. Component of a complex composed of FXN, NFS1, LYRM4 and ISCU. Post-translationally, cysteine persulfide is reduced by thiol-containing molecules such as glutathione and L-cysteine. Phosphorylation at Ser-15 is required for ISCU protein stabilization in the cytosol, whereas dephosphorylation of Ser-15, due to the inhibition of mTORC1 (mammalian target of rapamycin complex 1) complex, leads to degradation of the precursor form and ultimately to a decrease in the mitochondrial mature form.

The protein localises to the mitochondrion. In terms of biological role, mitochondrial scaffold protein, of the core iron-sulfur cluster (ISC) assembly complex, that provides the structural architecture on which the [2Fe-2S] clusters are assembled. The core iron-sulfur cluster (ISC) assembly complex is involved in the de novo synthesis of a [2Fe-2S] cluster, the first step of the mitochondrial iron-sulfur protein biogenesis. This process is initiated by the cysteine desulfurase complex (NFS1:LYRM4:NDUFAB1) that produces persulfide which is delivered on the scaffold protein ISCU in a FXN-dependent manner. Then this complex is stabilized by FDX2 which provides reducing equivalents to accomplish the [2Fe-2S] cluster assembly. Finally, the [2Fe-2S] cluster is transferred from ISCU to chaperone proteins, including HSCB, HSPA9 and GLRX5. Exists as two slow interchanging conformational states, a structured (S) and disordered (D) form. May modulate NFS1 desulfurase activity in a zinc-dependent manner. Modulates the interaction between FXN and the cysteine desulfurase complex. This chain is Iron-sulfur cluster assembly enzyme ISCU, found in Mus musculus (Mouse).